A 515-amino-acid chain; its full sequence is Probable multifunctional siroheme biosynthesis protein HemA (515 aa).

NAD(+) is bound by residues 26 to 27 and 47 to 48; these read SL and IR. The segment at 26–174 is glutamyl-tRNA reductase; it reads SLDYKSAAID…TAAKKAKTEI (149 aa). L-glutamyl-tRNA(Glu) is bound by residues 68–71, Ser-127, Glu-132, and Gln-138; that span reads TCNR. The Nucleophile role is filled by Cys-69. Residue 206–211 participates in NADP(+) binding; it reads GNGEIG. A precorrin-2 dehydrogenase /sirohydrochlorin ferrochelatase region spans residues 367 to 507; it reads FPLFIDLSGK…SLVKSVAEQI (141 aa).

In the N-terminal section; belongs to the glutamyl-tRNA reductase family. It in the C-terminal section; belongs to the precorrin-2 dehydrogenase / sirohydrochlorin ferrochelatase family. In terms of assembly, homodimer.

It carries out the reaction (S)-4-amino-5-oxopentanoate + tRNA(Glu) + NADP(+) = L-glutamyl-tRNA(Glu) + NADPH + H(+). The catalysed reaction is precorrin-2 + NAD(+) = sirohydrochlorin + NADH + 2 H(+). It catalyses the reaction siroheme + 2 H(+) = sirohydrochlorin + Fe(2+). It participates in cofactor biosynthesis; adenosylcobalamin biosynthesis; sirohydrochlorin from precorrin-2: step 1/1. Its pathway is porphyrin-containing compound metabolism; siroheme biosynthesis; siroheme from sirohydrochlorin: step 1/1. The protein operates within porphyrin-containing compound metabolism; siroheme biosynthesis; sirohydrochlorin from precorrin-2: step 1/1. It functions in the pathway porphyrin-containing compound metabolism; protoporphyrin-IX biosynthesis; 5-aminolevulinate from L-glutamyl-tRNA(Glu): step 1/2. In terms of biological role, multifunctional enzyme that catalyzes the NADPH-dependent reduction of glutamyl-tRNA(Glu) to glutamate 1-semialdehyde (GSA), the NAD-dependent ring dehydrogenation of precorrin-2 to sirohydrochlorin and finally, the ferrochelation of sirohydrochlorin to yield siroheme. The polypeptide is Probable multifunctional siroheme biosynthesis protein HemA (Ruminiclostridium josui (Clostridium josui)).